Here is a 127-residue protein sequence, read N- to C-terminus: Lymphocyte antigen 6D (127 aa).

Positions 1 to 20 (MKTALLVLLVLAVATSPAWA) are cleaved as a signal peptide. One can recognise a UPAR/Ly6 domain in the interval 21–108 (LRCHVCTNSA…AAPGHALLSS (88 aa)). Cystine bridges form between Cys-23/Cys-45, Cys-26/Cys-32, Cys-38/Cys-63, Cys-67/Cys-86, and Cys-87/Cys-92. The GPI-anchor amidated serine moiety is linked to residue Ser-98. Positions 99–127 (AAPGHALLSSVTLGLATSLSLLTVMALCL) are cleaved as a propeptide — removed in mature form.

As to expression, lymphoid cells lacking Ly6d, called ALP (all-lymphoid progenitor), retain full lymphoid potential and early thymic seeding activity, whereas cells containing Ly6d, called BLP (B-cell-biased lymphoid progenitor), up-regulate the B-cell specifying factors Ebf1 and Pax5 and behave essentially as B-cell progenitors (at protein level). Thymocytes and B-cells.

The protein resides in the cell membrane. May act as a specification marker at earliest stage specification of lymphocytes between B- and T-cell development. Marks the earliest stage of B-cell specification. This is Lymphocyte antigen 6D (Ly6d) from Mus musculus (Mouse).